A 65-amino-acid polypeptide reads, in one-letter code: Small ribosomal subunit protein eS17 (65 aa).

It belongs to the eukaryotic ribosomal protein eS17 family.

This Methanobrevibacter smithii (strain ATCC 35061 / DSM 861 / OCM 144 / PS) protein is Small ribosomal subunit protein eS17.